The primary structure comprises 3640 residues: Serine/threonine-protein kinase SMG1 (3640 aa).

Polar residues predominate over residues 21-34; sequence NDWQPRSDSLSASQ. The segment at 21–41 is disordered; that stretch reads NDWQPRSDSLSASQDGVKCSV. The FAT domain maps to 1495 to 1843; it reads YCHSGKCELA…LYPAIVGSIS (349 aa). An HEAT repeat occupies 1794 to 1829; it reads APWRGIIPQLFSRLNHPEAYIRQSICSLLCRVAQDS. Residues 1870 to 1890 form a disordered region; it reads GLCGGESETGSGPTSQESSRG. Residues 1874–1887 show a composition bias toward low complexity; sequence GESETGSGPTSQES. The PI3K/PI4K catalytic domain occupies 2102–2441; it reads VGNTITILPT…MERDITRSLF (340 aa). The interval 2108-2114 is G-loop; it reads ILPTKTK. Positions 2310–2318 are catalytic loop; the sequence is GLGDRHLDN. The segment at 2330 to 2354 is activation loop; that stretch reads HIDYNVCFEKGKSLRVPEKVPFRMT. An FATC domain is found at 3608–3640; the sequence is RRMSVTEQVDYVIKEATNVDNLAQLYEGWTAWV.

This sequence belongs to the PI3/PI4-kinase family. The cofactor is Mn(2+). Autophosphorylated.

It localises to the nucleus. Its subcellular location is the cytoplasm. It carries out the reaction L-seryl-[protein] + ATP = O-phospho-L-seryl-[protein] + ADP + H(+). The enzyme catalyses L-threonyl-[protein] + ATP = O-phospho-L-threonyl-[protein] + ADP + H(+). Functionally, serine/threonine protein kinase involved in both mRNA surveillance and genotoxic stress response pathways. Recognizes the substrate consensus sequence [ST]-Q. Plays a central role in nonsense-mediated decay (NMD) of mRNAs containing premature stop codons by phosphorylating UPF1/RENT1. In Danio rerio (Zebrafish), this protein is Serine/threonine-protein kinase SMG1.